The following is a 429-amino-acid chain: Histidine--tRNA ligase (429 aa).

This sequence belongs to the class-II aminoacyl-tRNA synthetase family. Homodimer.

The protein resides in the cytoplasm. It catalyses the reaction tRNA(His) + L-histidine + ATP = L-histidyl-tRNA(His) + AMP + diphosphate + H(+). This Cyanothece sp. (strain PCC 7425 / ATCC 29141) protein is Histidine--tRNA ligase.